Here is a 635-residue protein sequence, read N- to C-terminus: Bifunctional lysine-specific demethylase and histidyl-hydroxylase NO66 (635 aa).

Disordered regions lie at residues Met-1 to Ser-115 and Phe-141 to Gly-190. Residues Ala-84–Ala-99 are compositionally biased toward low complexity. Positions Phe-141–Val-156 are enriched in polar residues. Positions Cys-295–Ala-440 constitute a JmjC domain. 3 residues coordinate Fe cation: His-341, Asp-343, and His-406.

Belongs to the ROX family. NO66 subfamily. Fe(2+) serves as cofactor.

The protein localises to the nucleus. The catalysed reaction is N(6),N(6)-dimethyl-L-lysyl(36)-[histone H3] + 2 2-oxoglutarate + 2 O2 = L-lysyl(36)-[histone H3] + 2 formaldehyde + 2 succinate + 2 CO2. Oxygenase that can act as both a histone lysine demethylase and a ribosomal histidine hydroxylase. Specifically demethylates 'Lys-4' (H3K4me) and 'Lys-36' (H3K36me) of histone H3, thereby playing a central role in histone code. This Aedes aegypti (Yellowfever mosquito) protein is Bifunctional lysine-specific demethylase and histidyl-hydroxylase NO66.